Reading from the N-terminus, the 91-residue chain is MNNALGLVETKGLVGAIEAADAMVKSANVQLVGYEKIGSGLITVMVRGDVGAVKAAVDAGSAAASAVGEVKSCHVIPRPHSDVEAILPKSA.

In terms of domain architecture, BMC spans A4 to P88.

It belongs to the bacterial microcompartments protein family. In terms of assembly, homohexamer with a central pore. Interacts with PduP, which targets PduP to the BMC. Interacts with shell protein PduA.

It is found in the bacterial microcompartment. It participates in polyol metabolism; 1,2-propanediol degradation. In terms of biological role, one of the major shell proteins of the bacterial microcompartment (BMC) dedicated to 1,2-propanediol (1,2-PD) degradation. At least one of PduA or PduJ is required for BMC assembly; it must be encoded as the first gene in the pdu operon. Required for structural integrity of BMCs and to mitigate propionaldehyde toxicity, probably joins facets responsible for BMC closure. Probably the hub for binding multiple enzymes to the interior of the BMC. Functionally, expression of a cosmid containing the full 21-gene pdu operon in E.coli allows E.coli to grow on 1,2-PD with the appearance of BMCs in its cytoplasm. Overexpression of this protein leads to an internal structure with a whorled architecture. Its function is as follows. The 1,2-PD-specific bacterial microcompartment (BMC) concentrates low levels of 1,2-PD catabolic enzymes, concentrates volatile reaction intermediates thus enhancing pathway flux and keeps the level of toxic, mutagenic propionaldehyde low. The protein is Bacterial microcompartment shell protein PduJ of Citrobacter freundii.